Consider the following 458-residue polypeptide: UDP-N-acetylmuramate--L-alanine ligase (458 aa).

112–118 serves as a coordination point for ATP; sequence GTHGKTT.

The protein belongs to the MurCDEF family.

The protein resides in the cytoplasm. The enzyme catalyses UDP-N-acetyl-alpha-D-muramate + L-alanine + ATP = UDP-N-acetyl-alpha-D-muramoyl-L-alanine + ADP + phosphate + H(+). The protein operates within cell wall biogenesis; peptidoglycan biosynthesis. In terms of biological role, cell wall formation. The polypeptide is UDP-N-acetylmuramate--L-alanine ligase (Syntrophotalea carbinolica (strain DSM 2380 / NBRC 103641 / GraBd1) (Pelobacter carbinolicus)).